We begin with the raw amino-acid sequence, 453 residues long: Bifunctional protein GlmU (453 aa).

Residues 1 to 231 (MERTCLAIIL…EVEMTGCNNR (231 aa)) are pyrophosphorylase. Residues 10-13 (LAAG), K24, Q77, 82-83 (GT), 105-107 (YGD), G143, E157, N172, and N229 each bind UDP-N-acetyl-alpha-D-glucosamine. D107 provides a ligand contact to Mg(2+). N229 contacts Mg(2+). Residues 232–252 (AELAFIERLWQERRRHELMLS) form a linker region. An N-acetyltransferase region spans residues 253-453 (GVTMIAPETV…AIKAAKKGSH (201 aa)). Residues R318 and K336 each contribute to the UDP-N-acetyl-alpha-D-glucosamine site. Catalysis depends on H348, which acts as the Proton acceptor. 2 residues coordinate UDP-N-acetyl-alpha-D-glucosamine: Y351 and N362. Acetyl-CoA-binding positions include A365, 371-372 (NY), S390, S408, and R425.

This sequence in the N-terminal section; belongs to the N-acetylglucosamine-1-phosphate uridyltransferase family. The protein in the C-terminal section; belongs to the transferase hexapeptide repeat family. As to quaternary structure, homotrimer. The cofactor is Mg(2+).

Its subcellular location is the cytoplasm. It carries out the reaction alpha-D-glucosamine 1-phosphate + acetyl-CoA = N-acetyl-alpha-D-glucosamine 1-phosphate + CoA + H(+). The catalysed reaction is N-acetyl-alpha-D-glucosamine 1-phosphate + UTP + H(+) = UDP-N-acetyl-alpha-D-glucosamine + diphosphate. It participates in nucleotide-sugar biosynthesis; UDP-N-acetyl-alpha-D-glucosamine biosynthesis; N-acetyl-alpha-D-glucosamine 1-phosphate from alpha-D-glucosamine 6-phosphate (route II): step 2/2. The protein operates within nucleotide-sugar biosynthesis; UDP-N-acetyl-alpha-D-glucosamine biosynthesis; UDP-N-acetyl-alpha-D-glucosamine from N-acetyl-alpha-D-glucosamine 1-phosphate: step 1/1. It functions in the pathway bacterial outer membrane biogenesis; LPS lipid A biosynthesis. In terms of biological role, catalyzes the last two sequential reactions in the de novo biosynthetic pathway for UDP-N-acetylglucosamine (UDP-GlcNAc). The C-terminal domain catalyzes the transfer of acetyl group from acetyl coenzyme A to glucosamine-1-phosphate (GlcN-1-P) to produce N-acetylglucosamine-1-phosphate (GlcNAc-1-P), which is converted into UDP-GlcNAc by the transfer of uridine 5-monophosphate (from uridine 5-triphosphate), a reaction catalyzed by the N-terminal domain. The chain is Bifunctional protein GlmU from Rhizobium rhizogenes (strain K84 / ATCC BAA-868) (Agrobacterium radiobacter).